A 67-amino-acid polypeptide reads, in one-letter code: Small ribosomal subunit protein bS21 (67 aa).

Belongs to the bacterial ribosomal protein bS21 family.

The polypeptide is Small ribosomal subunit protein bS21 (Desulfovibrio desulfuricans (strain ATCC 27774 / DSM 6949 / MB)).